The following is a 509-amino-acid chain: Transcription factor SOX-9 (509 aa).

2 disordered regions span residues 1-67 (MNLL…SEED) and 160-273 (RLRV…FRDV). The segment covering 30-41 (SAGSPCPSGSGS) has biased composition (low complexity). Residues 42 to 52 (DTENTRPQENT) are compositionally biased toward polar residues. Composition is skewed to basic and acidic residues over residues 56-67 (GEPDLKKESEED) and 160-174 (RLRV…DYKY). The tract at residues 63-103 (ESEEDKFPVCIREAVSQVLKGYDWTLVPMPVRVNGSSKNKP) is dimerization (DIM). A PQA region spans residues 63–103 (ESEEDKFPVCIREAVSQVLKGYDWTLVPMPVRVNGSSKNKP). At S64 the chain carries Phosphoserine. Residues 105 to 173 (VKRPMNAFMV…QHKKDHPDYK (69 aa)) constitute a DNA-binding region (HMG box). At S211 the chain carries Phosphoserine. A transactivation domain (TAM) region spans residues 224-307 (PGEHSGQSQG…LPPNGHPGVP (84 aa)). 2 short sequence motifs (9aaTAD) span residues 275–284 (IGELSSDVIS) and 290–298 (DVNEFDQYL). Residues 330–415 (SAGHVWMSKQ…HYSEQQQHSP (86 aa)) form a disordered region. Positions 341 to 376 (APPPPPQQPPQAPPAPQAPPQPQAAPPQQPAAPPQQ) are enriched in pro residues. Polar residues predominate over residues 380-415 (HTLTTLSSEPGQSQRTHIKTEQLSPSHYSEQQQHSP). The transactivation domain (TAC) stretch occupies residues 394-509 (RTHIKTEQLS…QPVYTQLTRP (116 aa)). A Glycyl lysine isopeptide (Lys-Gly) (interchain with G-Cter in ubiquitin) cross-link involves residue K398. Positions 460–468 (TGLYSTFTY) match the 9aaTAD 3 motif. A disordered region spans residues 479–509 (PIADTSGVPSIPQTHSPQHWEQPVYTQLTRP). The span at 485 to 509 (GVPSIPQTHSPQHWEQPVYTQLTRP) shows a compositional bias: polar residues.

As to quaternary structure, homodimer; homodimerization is required for activity. Interacts (via C-terminus) with ZNF219; forming a complex that binds to the COL2A1 promoter and activates COL2A1 expression. Interacts with DDRGK1. Interacts with EP300/p300. Interacts with beta-catenin (CTNNB1); inhibiting CTNNB1 activity by competing with the binding sites of TCF/LEF within CTNNB1. In terms of processing, acetylated; acetylation impairs nuclear localization and ability to transactivate expression of target genes. Deacetylated by SIRT1. Phosphorylation at Ser-64 and Ser-211 by PKA increases transcriptional activity and may help delay chondrocyte maturation downstream of PTHLH/PTHrP signaling. Phosphorylation at either Ser-64 or Ser-211 is required for sumoylation, but phosphorylation is not dependent on sumoylation. Phosphorylated on tyrosine residues; tyrosine dephosphorylation by PTPN11/SHP2 blocks SOX9 phosphorylation by PKA and subsequent SUMOylation. Post-translationally, ubiquitinated; ubiquitination leads to proteasomal degradation and is negatively regulated by DDRGK1. In terms of processing, sumoylated; phosphorylation at either Ser-64 or Ser-211 is required for sumoylation. Sumoylation is induced by BMP signaling pathway.

It localises to the nucleus. Transcription factor that plays a key role in chondrocytes differentiation and skeletal development. Specifically binds the 5'-ACAAAG-3' DNA motif present in enhancers and super-enhancers and promotes expression of genes important for chondrogenesis, including cartilage matrix protein-coding genes COL2A1, COL4A2, COL9A1, COL11A2 and ACAN, SOX5 and SOX6. Also binds to some promoter regions. Plays a central role in successive steps of chondrocyte differentiation. Absolutely required for precartilaginous condensation, the first step in chondrogenesis during which skeletal progenitors differentiate into prechondrocytes. Together with SOX5 and SOX6, required for overt chondrogenesis when condensed prechondrocytes differentiate into early stage chondrocytes, the second step in chondrogenesis. Later, required to direct hypertrophic maturation and block osteoblast differentiation of growth plate chondrocytes: maintains chondrocyte columnar proliferation, delays prehypertrophy and then prevents osteoblastic differentiation of chondrocytes by lowering beta-catenin (CTNNB1) signaling and RUNX2 expression. Also required for chondrocyte hypertrophy, both indirectly, by keeping the lineage fate of chondrocytes, and directly, by remaining present in upper hypertrophic cells and transactivating COL10A1 along with MEF2C. Low lipid levels are the main nutritional determinant for chondrogenic commitment of skeletal progenitor cells: when lipids levels are low, FOXO (FOXO1 and FOXO3) transcription factors promote expression of SOX9, which induces chondrogenic commitment and suppresses fatty acid oxidation. Mechanistically, helps, but is not required, to remove epigenetic signatures of transcriptional repression and deposit active promoter and enhancer marks at chondrocyte-specific genes. Acts in cooperation with the Hedgehog pathway-dependent GLI (GLI1 and GLI3) transcription factors. In addition to cartilage development, also acts as a regulator of proliferation and differentiation in epithelial stem/progenitor cells: involved in the lung epithelium during branching morphogenesis, by balancing proliferation and differentiation and regulating the extracellular matrix. Controls epithelial branching during kidney development. The chain is Transcription factor SOX-9 from Homo sapiens (Human).